The chain runs to 201 residues: Zinc finger protein 239 (201 aa).

7 C2H2-type zinc fingers span residues 6–28 (YKCDKCGKGFTRSSSLLVHHSVH), 34–56 (FKCDRCGKGFSQSSKLHIHKRVH), 62–84 (YACEECGMSFSQRSNLHIHQRVH), 90–112 (YKCGECGKGFSQSSNLHIHRCTH), 118–140 (YQCYECGKGFSQSSDLRIHLRVH), 146–168 (YHCGKCGQGFSQSSKLLIHQRVH), and 174–196 (YECSKCGKGFSQSSNLHIHQRVH).

Belongs to the krueppel C2H2-type zinc-finger protein family. Preferentially expressed in transformed mouse cells.

It localises to the nucleus. In terms of biological role, may be involved in transcriptional regulation. The chain is Zinc finger protein 239 (Znf239) from Mus musculus (Mouse).